The sequence spans 249 residues: NAD kinase (249 aa).

Residue Asp45 is the Proton acceptor of the active site. Residues 45–46, Arg50, 110–111, Asp138, and 149–154 each bind NAD(+); these read DG, NE, and SGWGMS.

Belongs to the NAD kinase family. Requires a divalent metal cation as cofactor.

It localises to the cytoplasm. The enzyme catalyses NAD(+) + ATP = ADP + NADP(+) + H(+). In terms of biological role, involved in the regulation of the intracellular balance of NAD and NADP, and is a key enzyme in the biosynthesis of NADP. Catalyzes specifically the phosphorylation on 2'-hydroxyl of the adenosine moiety of NAD to yield NADP. The sequence is that of NAD kinase from Saccharolobus islandicus (strain Y.N.15.51 / Yellowstone #2) (Sulfolobus islandicus).